The sequence spans 78 residues: Large ribosomal subunit protein bL28 (78 aa).

The protein belongs to the bacterial ribosomal protein bL28 family.

In Prochlorococcus marinus (strain MIT 9215), this protein is Large ribosomal subunit protein bL28.